Reading from the N-terminus, the 171-residue chain is 3-hydroxydecanoyl-[acyl-carrier-protein] dehydratase (171 aa).

Histidine 71 is an active-site residue.

The protein belongs to the thioester dehydratase family. FabA subfamily. In terms of assembly, homodimer.

Its subcellular location is the cytoplasm. The catalysed reaction is a (3R)-hydroxyacyl-[ACP] = a (2E)-enoyl-[ACP] + H2O. It carries out the reaction (3R)-hydroxydecanoyl-[ACP] = (2E)-decenoyl-[ACP] + H2O. It catalyses the reaction (2E)-decenoyl-[ACP] = (3Z)-decenoyl-[ACP]. It functions in the pathway lipid metabolism; fatty acid biosynthesis. In terms of biological role, necessary for the introduction of cis unsaturation into fatty acids. Catalyzes the dehydration of (3R)-3-hydroxydecanoyl-ACP to E-(2)-decenoyl-ACP and then its isomerization to Z-(3)-decenoyl-ACP. Can catalyze the dehydratase reaction for beta-hydroxyacyl-ACPs with saturated chain lengths up to 16:0, being most active on intermediate chain length. The protein is 3-hydroxydecanoyl-[acyl-carrier-protein] dehydratase of Sinorhizobium fredii (strain NBRC 101917 / NGR234).